Reading from the N-terminus, the 283-residue chain is Formamidopyrimidine-DNA glycosylase (283 aa).

The active-site Schiff-base intermediate with DNA is the P2. Residue E3 is the Proton donor of the active site. Catalysis depends on K58, which acts as the Proton donor; for beta-elimination activity. The DNA site is built by H100, R119, and R162. The FPG-type zinc-finger motif lies at 247–283 (RVYGREGLPCVTPGCSGTVGRIVQSGRSSFHCPLCQR). Residue R273 is the Proton donor; for delta-elimination activity of the active site.

This sequence belongs to the FPG family. Monomer. Zn(2+) is required as a cofactor.

The enzyme catalyses Hydrolysis of DNA containing ring-opened 7-methylguanine residues, releasing 2,6-diamino-4-hydroxy-5-(N-methyl)formamidopyrimidine.. It carries out the reaction 2'-deoxyribonucleotide-(2'-deoxyribose 5'-phosphate)-2'-deoxyribonucleotide-DNA = a 3'-end 2'-deoxyribonucleotide-(2,3-dehydro-2,3-deoxyribose 5'-phosphate)-DNA + a 5'-end 5'-phospho-2'-deoxyribonucleoside-DNA + H(+). Functionally, involved in base excision repair of DNA damaged by oxidation or by mutagenic agents. Acts as a DNA glycosylase that recognizes and removes damaged bases. Has a preference for oxidized purines, such as 7,8-dihydro-8-oxoguanine (8-oxoG). Has AP (apurinic/apyrimidinic) lyase activity and introduces nicks in the DNA strand. Cleaves the DNA backbone by beta-delta elimination to generate a single-strand break at the site of the removed base with both 3'- and 5'-phosphates. In Cereibacter sphaeroides (strain ATCC 17029 / ATH 2.4.9) (Rhodobacter sphaeroides), this protein is Formamidopyrimidine-DNA glycosylase.